The primary structure comprises 269 residues: Formamidopyrimidine-DNA glycosylase (269 aa).

Proline 2 acts as the Schiff-base intermediate with DNA in catalysis. Catalysis depends on glutamate 3, which acts as the Proton donor. Lysine 57 (proton donor; for beta-elimination activity) is an active-site residue. Positions 90, 109, and 150 each coordinate DNA. An FPG-type zinc finger spans residues glutamine 235–lysine 269. Arginine 259 serves as the catalytic Proton donor; for delta-elimination activity.

The protein belongs to the FPG family. In terms of assembly, monomer. The cofactor is Zn(2+).

It catalyses the reaction Hydrolysis of DNA containing ring-opened 7-methylguanine residues, releasing 2,6-diamino-4-hydroxy-5-(N-methyl)formamidopyrimidine.. The catalysed reaction is 2'-deoxyribonucleotide-(2'-deoxyribose 5'-phosphate)-2'-deoxyribonucleotide-DNA = a 3'-end 2'-deoxyribonucleotide-(2,3-dehydro-2,3-deoxyribose 5'-phosphate)-DNA + a 5'-end 5'-phospho-2'-deoxyribonucleoside-DNA + H(+). Involved in base excision repair of DNA damaged by oxidation or by mutagenic agents. Acts as a DNA glycosylase that recognizes and removes damaged bases. Has a preference for oxidized purines, such as 7,8-dihydro-8-oxoguanine (8-oxoG). Has AP (apurinic/apyrimidinic) lyase activity and introduces nicks in the DNA strand. Cleaves the DNA backbone by beta-delta elimination to generate a single-strand break at the site of the removed base with both 3'- and 5'-phosphates. The sequence is that of Formamidopyrimidine-DNA glycosylase from Photobacterium profundum (strain SS9).